The sequence spans 1052 residues: Membrane-bound transcription factor site-1 protease (1052 aa).

The N-terminal stretch at 1-17 (MKLVNIWLLLLVVLLCG) is a signal peptide. The propeptide occupies 18 to 186 (KKHLGDRLGK…TGRHSSRRLL (169 aa)). An N-linked (GlcNAc...) asparagine glycan is attached at Asn148. Residue Ser168 is modified to Phosphoserine. The Lumenal segment spans residues 187–999 (RAIPRQVAQT…MPGRYNQEVG (813 aa)). The Peptidase S8 domain occupies 190 to 472 (PRQVAQTLQA…HGKLDLLRAY (283 aa)). The active-site Charge relay system is the Asp218. A glycan (N-linked (GlcNAc...) asparagine) is linked at Asn236. Catalysis depends on His249, which acts as the Charge relay system. Asn305 carries N-linked (GlcNAc...) asparagine glycosylation. The active-site Charge relay system is Ser414. Residues Asn515 and Asn728 are each glycosylated (N-linked (GlcNAc...) asparagine). Residues 877 to 887 (PSLSHSGNRQR) are compositionally biased toward polar residues. The disordered stretch occupies residues 877 to 900 (PSLSHSGNRQRPPSGAGLAPPERM). N-linked (GlcNAc...) asparagine glycosylation is present at Asn939. Residues 1000–1022 (QTIPVFAFLGAMVALAFFVVQIS) form a helical membrane-spanning segment. Over 1023–1052 (KAKSRPKRRRPRAKRPQLAQQAHPARTPSV) the chain is Cytoplasmic. Positions 1026 to 1037 (SRPKRRRPRAKR) are enriched in basic residues. Residues 1026-1052 (SRPKRRRPRAKRPQLAQQAHPARTPSV) are disordered.

It belongs to the peptidase S8 family. In terms of assembly, interacts with LYSET; this interaction bridges GNPTAB to MBTPS1. Ca(2+) is required as a cofactor. In terms of processing, the 148 kDa zymogen is processed progressively into two membrane-bound 120 and 106 kDa forms in the endoplasmic reticulum, and late into a secreted 98 kDa form. The propeptide is autocatalytically removed through an intramolecular cleavage after Leu-186. Further cleavage generates 14, 10, and 8 kDa intermediates. In terms of tissue distribution, widely expressed. In adult rat, highly expressed in anterior pituitary, thyroid and adrenal glands and in liver. In 2-day old rat, detected in developing skin, striated muscles, cardiac muscles, bones, teeth and internal organs. Highly expressed in retina, cerebellum, pituitary, submaxillary, thyroid and adrenal glands, molars, thymus, kidney and intestine.

The protein resides in the endoplasmic reticulum membrane. It is found in the golgi apparatus membrane. It catalyses the reaction Processes precursors containing basic and hydrophobic/aliphatic residues at P4 and P2, respectively, with a relatively relaxed acceptance of amino acids at P1 and P3.. Inhibited by divalent copper and zinc ions, but not by nickel or cobalt. Inhibited by its prosegment, but not smaller fragments. Inhibited by 4-(2-aminoethyl)benzenesulfonyl fluoride (AEBSF), a serine protease inhibitor. Serine protease that cleaves after hydrophobic or small residues, provided that Arg or Lys is in position P4: known substrates include SREBF1/SREBP1, SREBF2/SREBP2, BDNF, GNPTAB, ATF6, ATF6B and FAM20C. Cleaves substrates after Arg-Ser-Val-Leu (SREBP2), Arg-His-Leu-Leu (ATF6), Arg-Gly-Leu-Thr (BDNF) and its own propeptide after Arg-Arg-Leu-Leu. Catalyzes the first step in the proteolytic activation of the sterol regulatory element-binding proteins (SREBPs) SREBF1/SREBP1 and SREBF2/SREBP2. Also mediates the first step in the proteolytic activation of the cyclic AMP-dependent transcription factor ATF-6 (ATF6 and ATF6B). Mediates the protein cleavage of GNPTAB into subunit alpha and beta, thereby participating in biogenesis of lysosomes. Cleaves the propeptide from FAM20C which is required for FAM20C secretion from the Golgi apparatus membrane and for enhancement of FAM20C kinase activity, promoting osteoblast differentiation and biomineralization. Involved in the regulation of M6P-dependent Golgi-to-lysosome trafficking of lysosomal enzymes. It is required for the activation of CREB3L2/BBF2H7, a transcriptional activator of MIA3/TANGO and other genes controlling mega vesicle formation. Therefore, it plays a key role in the regulation of mega vesicle-mediated collagen trafficking. In astrocytes and osteoblasts, upon DNA damage and ER stress, mediates the first step of the regulated intramembrane proteolytic activation of the transcription factor CREB3L1, leading to the inhibition of cell-cycle progression. The sequence is that of Membrane-bound transcription factor site-1 protease (Mbtps1) from Rattus norvegicus (Rat).